The following is a 171-amino-acid chain: Shikimate kinase (171 aa).

14-19 (GAGKST) serves as a coordination point for ATP. Residue Ser18 coordinates Mg(2+). Substrate is bound by residues Asp36, Arg60, and Gly82. Arg120 is an ATP binding site. Position 139 (Arg139) interacts with substrate. Gln156 contributes to the ATP binding site.

The protein belongs to the shikimate kinase family. Monomer. Mg(2+) is required as a cofactor.

It localises to the cytoplasm. It catalyses the reaction shikimate + ATP = 3-phosphoshikimate + ADP + H(+). It participates in metabolic intermediate biosynthesis; chorismate biosynthesis; chorismate from D-erythrose 4-phosphate and phosphoenolpyruvate: step 5/7. Its function is as follows. Catalyzes the specific phosphorylation of the 3-hydroxyl group of shikimic acid using ATP as a cosubstrate. In Shewanella baltica (strain OS195), this protein is Shikimate kinase.